We begin with the raw amino-acid sequence, 305 residues long: MAPLDLDKYVEIARQCKYLPENDLKRLCDYVCDLLLEESNVQPVSTPVTVCGDIHGQFYDLCELFRTGGQVPDTNYIFMGDFVDRGYYSLETFTYLLALKAKWPDRITLLRGNHESRQITQVYGFYDECQTKYGNANAWRYCTKVFDMLTVAALIDEQILCVHGGLSPDIKTLDQIRTIERNQEIPHKGAFCDLVWSDPEDVDTWAISPRGAGWLFGAKVTNEFVHINNLKLICRAHQLVHEGYKFMFDEKLVTVWSAPNYCYRCGNIASIMVFKDVNTREPKLFRAVPDSERVIPPRTTTPYFL.

Met1 is subject to N-acetylmethionine. Positions 53, 55, 81, and 113 each coordinate Mn(2+). His114 (proton donor) is an active-site residue. Mn(2+)-binding residues include His163 and His237.

This sequence belongs to the PPP phosphatase family. PP-6 (PP-V) subfamily. In terms of assembly, protein phosphatase 6 (PP6) holoenzyme is proposed to be a heterotrimeric complex formed by the catalytic subunit, a SAPS domain-containing subunit (PP6R) and an ankyrin repeat-domain containing regulatory subunit (ARS). Interacts with subunits PPP6R1, PPP6R2 and PPP6R3. Interacts with subunit ANKRD28. Interacts with IGBP1. Interacts with MAP3K7. Interacts with NFKBIE. Interacts with TRIM14 and WRNIP1; these interactions positively regulate the RIG-I signaling pathway. Requires Mn(2+) as cofactor. As to expression, ubiquitously expressed in all tissues tested with strongest expression in lung, spleen, liver, kidney and brain. Weaker expression observed in bladder, pancreas, heart and skeletal muscle.

The protein resides in the mitochondrion. The protein localises to the cytoplasm. The catalysed reaction is O-phospho-L-seryl-[protein] + H2O = L-seryl-[protein] + phosphate. It catalyses the reaction O-phospho-L-threonyl-[protein] + H2O = L-threonyl-[protein] + phosphate. Catalytic subunit of protein phosphatase 6 (PP6). PP6 is a component of a signaling pathway regulating cell cycle progression in response to IL2 receptor stimulation. N-terminal domain restricts G1 to S phase progression in cancer cells, in part through control of cyclin D13 During mitosis, regulates spindle positioning. Down-regulates MAP3K7 kinase activation of the IL1 signaling pathway by dephosphorylation of MAP3K7. Acts as a regulator of innate immunity by mediating dephosphorylation CGAS, STING1 and RIGI. Also participates in the innate immune defense against viruses by desphosphorylating RIGI, an essential step that triggers RIGI-mediated signaling activation. Also regulates innate immunity by acting as a negative regulator of the cGAS-STING pathway: mediates dephosphorylation and inactivation of CGAS and STING1. CGAS dephosphorylation at 'Ser-420' impairs its ability to bind GTP, thereby inactivating it. The polypeptide is Serine/threonine-protein phosphatase 6 catalytic subunit (Mus musculus (Mouse)).